The following is a 198-amino-acid chain: Cytochrome c oxidase assembly protein CtaG (198 aa).

The Cytoplasmic portion of the chain corresponds to 1–12 (MADNGQADRKER). Residues 13–35 (SNGVIVGTCLAFVAGMIGMAYAA) traverse the membrane as a helical; Signal-anchor for type II membrane protein segment. At 36–198 (VPLYDMFCRV…QVKAKAENKL (163 aa)) the chain is on the periplasmic side.

This sequence belongs to the COX11/CtaG family.

The protein localises to the cell inner membrane. Functionally, exerts its effect at some terminal stage of cytochrome c oxidase synthesis, probably by being involved in the insertion of the copper B into subunit I. The chain is Cytochrome c oxidase assembly protein CtaG from Rhizobium meliloti (strain 1021) (Ensifer meliloti).